The primary structure comprises 442 residues: 3-dehydroquinate synthase, chloroplastic (442 aa).

Residues 1-58 (MAANTISLSNVAASKNLNSFQSRAFIAPPTIFFPVASAKSKPGELSLSSTTLSRSRVR) constitute a chloroplast transit peptide. Position 59 is an N-acetylalanine (Ala-59). Residues Asn-119, 150-152 (DGE), Lys-155, 183-188 (GGVIGD), 208-209 (TT), Lys-221, Lys-230, and 248-251 (TLNT) each bind NAD(+). Residue Glu-263 participates in a divalent metal cation binding. Lys-305 serves as a coordination point for NAD(+). Residues His-326 and His-343 each contribute to the a divalent metal cation site.

Belongs to the sugar phosphate cyclases superfamily. Dehydroquinate synthase family. As to quaternary structure, homodimer. The cofactor is a divalent metal cation. NAD(+) serves as cofactor.

The protein localises to the plastid. The protein resides in the chloroplast. The catalysed reaction is 7-phospho-2-dehydro-3-deoxy-D-arabino-heptonate = 3-dehydroquinate + phosphate. It participates in metabolic intermediate biosynthesis; chorismate biosynthesis; chorismate from D-erythrose 4-phosphate and phosphoenolpyruvate: step 2/7. Its function is as follows. Catalyzes the second step in the shikimate pathway. This is 3-dehydroquinate synthase, chloroplastic (DHQS) from Arabidopsis thaliana (Mouse-ear cress).